Consider the following 514-residue polypeptide: 2'-5'-oligoadenylate synthase-like protein (514 aa).

Ala2 is modified (N-acetylalanine). Ubiquitin-like domains are found at residues 354–433 (IHLT…IPSE) and 434–509 (IQVF…KGEA).

This sequence belongs to the 2-5A synthase family. In terms of assembly, specifically interacts with the ligand binding domain of the thyroid receptor (TR). TRIP14 does not require the presence of thyroid hormone for its interaction. Binds MBD1. In terms of tissue distribution, expressed in most tissues, with the highest levels in primary blood Leukocytes and other hematopoietic system tissues, colon, stomach and to some extent in testis.

Its subcellular location is the nucleus. The protein resides in the nucleolus. It is found in the cytoplasm. Its function is as follows. Does not have 2'-5'-OAS activity, but can bind double-stranded RNA. Displays antiviral activity against encephalomyocarditis virus (EMCV) and hepatitis C virus (HCV) via an alternative antiviral pathway independent of RNase L. In Homo sapiens (Human), this protein is 2'-5'-oligoadenylate synthase-like protein (OASL).